Consider the following 202-residue polypeptide: Large ribosomal subunit protein bL9 (202 aa).

Residues 168 to 202 form a disordered region; it reads DEAGFTEDYDPNAEPGEIPTELQDEAPAAEATDEA. The segment covering 192–202 has biased composition (low complexity); that stretch reads EAPAAEATDEA.

Belongs to the bacterial ribosomal protein bL9 family.

In terms of biological role, binds to the 23S rRNA. The polypeptide is Large ribosomal subunit protein bL9 (Rhizorhabdus wittichii (strain DSM 6014 / CCUG 31198 / JCM 15750 / NBRC 105917 / EY 4224 / RW1) (Sphingomonas wittichii)).